The chain runs to 825 residues: Actin filament-associated protein 1-like 2 (825 aa).

A Phosphotyrosine modification is found at Tyr-56. Residues 62–163 (VNGEQNSASP…SKGKAAPYQW (102 aa)) are disordered. Residues 80–94 (PLTNGEPSQHSSAPQ) are compositionally biased toward polar residues. The residue at position 113 (Thr-113) is a Phosphothreonine. PH domains lie at 175-271 (DARI…EVSG) and 353-447 (SLET…SESG). Ser-408 is modified (phosphoserine). At Tyr-413 the chain carries Phosphotyrosine. Ser-484 carries the phosphoserine modification. The tract at residues 571 to 614 (TLTVDPKPGTTPEEPHTESPGDPEVQQRQPEVQESSEPIEPTPR) is disordered. The span at 593-608 (PEVQQRQPEVQESSEP) shows a compositional bias: low complexity. Positions 657–754 (AEIKLGKNRT…VKDNLKKAEA (98 aa)) form a coiled coil. The segment at 757–801 (VTLGTTVDTTHLDNMSPRPQPKAATPNPPPDSTPVNSASVLKNRP) is disordered. A compositionally biased stretch (polar residues) spans 759-769 (LGTTVDTTHLD).

In terms of assembly, interacts with SRC. Interacts with LCK when tyrosine phosphorylated. Post-translationally, tyrosine phosphorylated (by SRC).

The protein resides in the cytoplasm. In terms of biological role, may play a role in a signaling cascade by enhancing the kinase activity of SRC. Contributes to SRC-regulated transcription activation. This is Actin filament-associated protein 1-like 2 (Afap1l2) from Mus musculus (Mouse).